Consider the following 188-residue polypeptide: Ribosome maturation factor RimM (188 aa).

Positions 96–169 (DDEFYYADLE…TLLIDPLAAG (74 aa)) constitute a PRC barrel domain.

This sequence belongs to the RimM family. As to quaternary structure, binds ribosomal protein uS19.

It is found in the cytoplasm. Functionally, an accessory protein needed during the final step in the assembly of 30S ribosomal subunit, possibly for assembly of the head region. Essential for efficient processing of 16S rRNA. May be needed both before and after RbfA during the maturation of 16S rRNA. It has affinity for free ribosomal 30S subunits but not for 70S ribosomes. This chain is Ribosome maturation factor RimM, found in Rhizobium etli (strain ATCC 51251 / DSM 11541 / JCM 21823 / NBRC 15573 / CFN 42).